A 404-amino-acid polypeptide reads, in one-letter code: Acetate kinase (404 aa).

Position 9 (Asn9) interacts with Mg(2+). Lys16 contributes to the ATP binding site. Arg100 serves as a coordination point for substrate. Asp157 serves as the catalytic Proton donor/acceptor. ATP contacts are provided by residues 215–219, 290–292, and 335–339; these read HLGNG, DMR, and GIGEN. Residue Glu386 participates in Mg(2+) binding.

The protein belongs to the acetokinase family. As to quaternary structure, homodimer. Requires Mg(2+) as cofactor. Mn(2+) serves as cofactor.

The protein resides in the cytoplasm. It carries out the reaction acetate + ATP = acetyl phosphate + ADP. It participates in metabolic intermediate biosynthesis; acetyl-CoA biosynthesis; acetyl-CoA from acetate: step 1/2. Its function is as follows. Catalyzes the formation of acetyl phosphate from acetate and ATP. Can also catalyze the reverse reaction. This chain is Acetate kinase, found in Methylocella silvestris (strain DSM 15510 / CIP 108128 / LMG 27833 / NCIMB 13906 / BL2).